We begin with the raw amino-acid sequence, 154 residues long: Fluoride-specific ion channel FluC 1 (154 aa).

4 helical membrane-spanning segments follow: residues 28 to 48 (VVAV…AASL), 59 to 79 (WTTF…MVVI), 91 to 111 (PFFG…AVDS), and 124 to 144 (LAYL…AAWA). 2 residues coordinate Na(+): Gly-99 and Thr-102.

Belongs to the fluoride channel Fluc/FEX (TC 1.A.43) family.

It is found in the cell membrane. It catalyses the reaction fluoride(in) = fluoride(out). Na(+) is not transported, but it plays an essential structural role and its presence is essential for fluoride channel function. Fluoride-specific ion channel. Important for reducing fluoride concentration in the cell, thus reducing its toxicity. The sequence is that of Fluoride-specific ion channel FluC 1 from Streptomyces coelicolor (strain ATCC BAA-471 / A3(2) / M145).